We begin with the raw amino-acid sequence, 435 residues long: CUB and peptidase domain-containing protein 1 (435 aa).

Residues 1 to 16 (SGFHLSFSFFRRAVCG) form the signal peptide. The Peptidase S1 domain maps to 25-261 (IVGGTVAPIN…LKSWITGKIS (237 aa)). Cysteine 50 and cysteine 66 are oxidised to a cystine. Catalysis depends on charge relay system residues histidine 65 and aspartate 116. Cystine bridges form between cysteine 151/cysteine 218, cysteine 182/cysteine 197, cysteine 208/cysteine 237, and cysteine 322/cysteine 341. Serine 212 (charge relay system) is an active-site residue. Residues 256-378 (ITGKISRSPA…SGFHLSFSFF (123 aa)) form the CUB domain.

It belongs to the peptidase S1 family. As to expression, component of the acid-insoluble organic matrix of the aragonitic skeleton (at protein level).

It is found in the secreted. The protein is CUB and peptidase domain-containing protein 1 of Acropora millepora (Staghorn coral).